Reading from the N-terminus, the 76-residue chain is Small proline-rich protein 2F (76 aa).

3 consecutive repeat copies span residues 21-29 (PKCPEPCSP), 30-38 (SVCPEPCPP), and 39-47 (PKCPEPCPE). Residues 21–47 (PKCPEPCSPSVCPEPCPPPKCPEPCPE) form a 3 X 9 AA approximate tandem repeats region. Positions 53–76 (SFQQKCPPVQPPPPCQQKCPPKSK) are disordered.

Belongs to the cornifin (SPRR) family. In terms of tissue distribution, expressed in uterus.

It localises to the cytoplasm. In terms of biological role, cross-linked envelope protein of keratinocytes. It is a keratinocyte protein that first appears in the cell cytosol, but ultimately becomes cross-linked to membrane proteins by transglutaminase. All that results in the formation of an insoluble envelope beneath the plasma membrane. This is Small proline-rich protein 2F (Sprr2f) from Mus musculus (Mouse).